A 489-amino-acid chain; its full sequence is Potassium voltage-gated channel subfamily A member 7 (489 aa).

The chain crosses the membrane as a helical span at residues 176-196 (VLAVVSVLVILVSIVVFCLET). Asn224 is a glycosylation site (N-linked (GlcNAc...) asparagine). Residues 242-262 (FFVVETLCICWFSFELLVRLV) traverse the membrane as a helical segment. The S-palmitoyl cysteine moiety is linked to residue Cys264. The helical transmembrane segment at 274–294 (VMNLIDFVAILPYFVALGTEL) threads the bilayer. The helical; Voltage-sensor transmembrane segment at 309–328 (ILRVIRLVRVFRIFKLSRHS) threads the bilayer. The chain crosses the membrane as a helical span at residues 345–365 (LGLLIFFLFIGVVLFSSAVYF). The Selectivity filter motif lies at 391 to 396 (TVGYGD). A helical membrane pass occupies residues 406–426 (IVGSLCAIAGVLTISLPVPVI).

It belongs to the potassium channel family. A (Shaker) (TC 1.A.1.2) subfamily. Kv1.7/KCNA7 sub-subfamily. In terms of assembly, heterotetramer of potassium channel proteins. As to expression, detected in heart, skeletal muscle, brain, and pancreatic islet cells.

Its subcellular location is the membrane. The enzyme catalyses K(+)(in) = K(+)(out). Functionally, mediates the voltage-dependent potassium ion permeability of excitable membranes. Assuming opened or closed conformations in response to the voltage difference across the membrane, the protein forms a potassium-selective channel through which potassium ions may pass in accordance with their electrochemical gradient. Channels formed by isoform 1 inactivate faster than channels formed by isoform 2. In Mus musculus (Mouse), this protein is Potassium voltage-gated channel subfamily A member 7 (Kcna7).